A 528-amino-acid chain; its full sequence is Ribonuclease Y (528 aa).

The helical transmembrane segment at 15–35 (SLLVFALICGSIIGYFLYSFF) threads the bilayer. The KH domain occupies 217-277 (NISVVNIPNE…IRREIAKKTL (61 aa)). One can recognise an HD domain in the interval 343–436 (VLKHSLEVAF…VAIADTLSSA (94 aa)).

The protein belongs to the RNase Y family.

It localises to the cell membrane. In terms of biological role, endoribonuclease that initiates mRNA decay. This Onion yellows phytoplasma (strain OY-M) protein is Ribonuclease Y.